Consider the following 382-residue polypeptide: uncharacterized protein (382 aa).

Helical transmembrane passes span 8 to 28 (VMLL…LNTL), 45 to 65 (MVSS…GYLI), 75 to 95 (YLAS…VGFW), 102 to 122 (FIAG…LMCS), 131 to 151 (LLAA…LLVS), 157 to 177 (LLHV…PLLF), 204 to 224 (LGVN…GLMP), 231 to 251 (GMAN…GILG), 270 to 290 (VQVF…AMAP), 291 to 311 (ALFI…AWAC), 325 to 345 (ALLL…AMLM), and 349 to 369 (SDNL…LMLL).

Belongs to the major facilitator superfamily. YcaD (TC 2.A.1.26) family.

The protein localises to the cell inner membrane. This is an uncharacterized protein from Salmonella agona (strain SL483).